We begin with the raw amino-acid sequence, 475 residues long: Sulfate adenylyltransferase subunit 1 (475 aa).

A tr-type G domain is found at 25–239 (KSLLRFLTCG…EVLETVEIQR (215 aa)). The G1 stretch occupies residues 34 to 41 (GSVDDGKS). 34 to 41 (GSVDDGKS) serves as a coordination point for GTP. Residues 92–96 (GITID) form a G2 region. A G3 region spans residues 113–116 (DTPG). GTP contacts are provided by residues 113–117 (DTPGH) and 168–171 (NKMD). The segment at 168 to 171 (NKMD) is G4. The interval 206-208 (SAL) is G5.

Belongs to the TRAFAC class translation factor GTPase superfamily. Classic translation factor GTPase family. CysN/NodQ subfamily. In terms of assembly, heterodimer composed of CysD, the smaller subunit, and CysN.

It carries out the reaction sulfate + ATP + H(+) = adenosine 5'-phosphosulfate + diphosphate. The protein operates within sulfur metabolism; hydrogen sulfide biosynthesis; sulfite from sulfate: step 1/3. Its function is as follows. With CysD forms the ATP sulfurylase (ATPS) that catalyzes the adenylation of sulfate producing adenosine 5'-phosphosulfate (APS) and diphosphate, the first enzymatic step in sulfur assimilation pathway. APS synthesis involves the formation of a high-energy phosphoric-sulfuric acid anhydride bond driven by GTP hydrolysis by CysN coupled to ATP hydrolysis by CysD. The sequence is that of Sulfate adenylyltransferase subunit 1 from Escherichia coli O9:H4 (strain HS).